Reading from the N-terminus, the 163-residue chain is Photosystem II extrinsic protein V (163 aa).

Residues Met-1–Ala-26 form the signal peptide. Heme c contacts are provided by His-67 and His-118.

Belongs to the cytochrome c family. PsbV subfamily. As to quaternary structure, PSII is composed of 1 copy each of membrane proteins PsbA, PsbB, PsbC, PsbD, PsbE, PsbF, PsbH, PsbI, PsbJ, PsbK, PsbL, PsbM, PsbT, PsbX, PsbY, PsbZ, Psb30/Ycf12, peripheral proteins PsbO, CyanoQ (PsbQ), PsbU, PsbV and a large number of cofactors. It forms dimeric complexes. Requires heme c as cofactor.

The protein resides in the cellular thylakoid membrane. One of the extrinsic, lumenal subunits of photosystem II (PSII). PSII is a light-driven water plastoquinone oxidoreductase, using light energy to abstract electrons from H(2)O, generating a proton gradient subsequently used for ATP formation. The extrinsic proteins stabilize the structure of photosystem II oxygen-evolving complex (OEC), the ion environment of oxygen evolution and protect the OEC against heat-induced inactivation. Low-potential cytochrome c that plays a role in the OEC of PSII. This is Photosystem II extrinsic protein V from Thermosynechococcus vestitus (strain NIES-2133 / IAM M-273 / BP-1).